The following is a 227-amino-acid chain: UPF0758 protein CPF_2399 (227 aa).

The MPN domain maps to 105–227 (KISKPSDVAK…FISLKEKDIL (123 aa)). Residues His176, His178, and Asp189 each coordinate Zn(2+). The short motif at 176-189 (HNHPSGDPTPSRDD) is the JAMM motif element.

The protein belongs to the UPF0758 family.

The chain is UPF0758 protein CPF_2399 from Clostridium perfringens (strain ATCC 13124 / DSM 756 / JCM 1290 / NCIMB 6125 / NCTC 8237 / Type A).